The chain runs to 271 residues: Mannosyl-3-phosphoglycerate phosphatase (271 aa).

The Nucleophile role is filled by D13. 3 residues coordinate Mg(2+): D13, D15, and D214.

The protein belongs to the HAD-like hydrolase superfamily. MPGP family. Mg(2+) is required as a cofactor.

The protein resides in the cytoplasm. The enzyme catalyses 2-O-(alpha-D-mannosyl)-3-phosphoglycerate + H2O = (2R)-2-O-(alpha-D-mannosyl)-glycerate + phosphate. The chain is Mannosyl-3-phosphoglycerate phosphatase (yedP) from Escherichia coli O6:H1 (strain CFT073 / ATCC 700928 / UPEC).